We begin with the raw amino-acid sequence, 245 residues long: tRNA pseudouridine synthase A (245 aa).

Catalysis depends on aspartate 52, which acts as the Nucleophile. Residue tyrosine 111 participates in substrate binding.

The protein belongs to the tRNA pseudouridine synthase TruA family. As to quaternary structure, homodimer.

It catalyses the reaction uridine(38/39/40) in tRNA = pseudouridine(38/39/40) in tRNA. In terms of biological role, formation of pseudouridine at positions 38, 39 and 40 in the anticodon stem and loop of transfer RNAs. This Rickettsia canadensis (strain McKiel) protein is tRNA pseudouridine synthase A.